The primary structure comprises 538 residues: Low affinity inorganic phosphate transporter 3 (538 aa).

The Cytoplasmic segment spans residues 1–24; that stretch reads MAKDQLQVLNALDVAKTQLYHFTA. The chain crosses the membrane as a helical span at residues 25-45; the sequence is IVIAGMGFFTDAYDLFCISLV. The Extracellular portion of the chain corresponds to 46–70; sequence TKLLGRIYYFHEGAPKPGILPSGIS. The helical transmembrane segment at 71 to 91 threads the bilayer; that stretch reads AAVNGVAFIGTLSGQLFFGWL. The Cytoplasmic segment spans residues 92-99; that stretch reads GDKLGRKK. A helical membrane pass occupies residues 100-120; it reads VYGMTLMLMVICSIACGLSFG. Over 121–122 the chain is Extracellular; it reads KT. A helical transmembrane segment spans residues 123–143; it reads ANGVIATLCFFRFWLGFGIGG. At 144–164 the chain is on the cytoplasmic side; the sequence is DYPLSATIMSEYANKKTRGAF. The chain crosses the membrane as a helical span at residues 165–185; it reads IAAVFAMQGFGILAGGIVALI. Residues 186–211 lie on the Extracellular side of the membrane; the sequence is VSAGFKNAYPAPTYSAHGKDSTPPEA. Residues 212–232 form a helical membrane-spanning segment; that stretch reads DYVWRIIVMIGALPALLTYYW. The Cytoplasmic segment spans residues 233–292; the sequence is RMKMPETARYTALVAKNTVKAAADMSKVLNVEIEEDKATVEKIEENGNSFGLFSKEFLRR. Residues 293–313 traverse the membrane as a helical segment; sequence HGLHLLGTTSTWFLLDIAFYS. At 314–345 the chain is on the extracellular side; it reads QNLFQKDIFSKIGWIPPPETMNALDEVFRIAR. A helical membrane pass occupies residues 346–366; sequence AQTLIALCSTVPGYWFTVAFI. The Cytoplasmic segment spans residues 367–371; that stretch reads DKMGR. A helical membrane pass occupies residues 372-392; that stretch reads FAIQLMGSFFMTVFMFALAIP. Residues 393-402 lie on the Extracellular side of the membrane; it reads YDHWTKKENR. Residues 403–423 form a helical membrane-spanning segment; sequence IGFVIMYSLTFFFANFGPNAT. Residues 424–442 lie on the Cytoplasmic side of the membrane; sequence TFVVPAEIFPARLRSTCHG. The helical transmembrane segment at 443–463 threads the bilayer; sequence ISAAAGKAGAIVGAFGFLYAA. Over 464–483 the chain is Extracellular; the sequence is QSTDPKKVDAGYPTGIGVKN. A helical membrane pass occupies residues 484 to 504; the sequence is ALIVLGCVNFLGMLSTLLVPE. At 505 to 538 the chain is on the cytoplasmic side; it reads SKGKSLEEMSKENEGEEENYGTETKGENAQTVPV. Positions 506 to 517 are enriched in basic and acidic residues; it reads KGKSLEEMSKEN. Residues 506 to 538 are disordered; it reads KGKSLEEMSKENEGEEENYGTETKGENAQTVPV.

The protein belongs to the major facilitator superfamily. Phosphate:H(+) symporter (TC 2.A.1.9) family. In terms of tissue distribution, expressed at low levels in non-mycorrhized roots.

It localises to the cell membrane. It carries out the reaction phosphate(in) + H(+)(in) = phosphate(out) + H(+)(out). Its function is as follows. Low-affinity transporter for external inorganic phosphate (Pi) probably involved in the acquisition of phosphate released by arbuscular mycorrhizal (AM) fungi during AM symbiosis. The chain is Low affinity inorganic phosphate transporter 3 from Petunia hybrida (Petunia).